The primary structure comprises 130 residues: MFMLQIADYIAENYRGKVVEVGIGRFTAVAELLARRGFEVFATDVVERRAPEGCRFYVDDVTKPNLKIYEGASLIYSLRPPPELFSAIVEVSRKVGADCLIKPLYGDYMEARIVNYKGAQFYLIRRENYD.

This sequence belongs to the UPF0146 family.

The protein is UPF0146 protein AF_0739.1 of Archaeoglobus fulgidus (strain ATCC 49558 / DSM 4304 / JCM 9628 / NBRC 100126 / VC-16).